The primary structure comprises 197 residues: Nucleoside triphosphate pyrophosphatase (197 aa).

The Proton acceptor role is filled by Asp71.

Belongs to the Maf family. It depends on a divalent metal cation as a cofactor.

The protein localises to the cytoplasm. It catalyses the reaction a ribonucleoside 5'-triphosphate + H2O = a ribonucleoside 5'-phosphate + diphosphate + H(+). The catalysed reaction is a 2'-deoxyribonucleoside 5'-triphosphate + H2O = a 2'-deoxyribonucleoside 5'-phosphate + diphosphate + H(+). In terms of biological role, nucleoside triphosphate pyrophosphatase. May have a dual role in cell division arrest and in preventing the incorporation of modified nucleotides into cellular nucleic acids. The chain is Nucleoside triphosphate pyrophosphatase from Trichormus variabilis (strain ATCC 29413 / PCC 7937) (Anabaena variabilis).